The chain runs to 133 residues: Agglutinin alpha chain (133 aa).

The region spanning 1-133 (GVTFDDGAYT…LDYFSIYLSL (133 aa)) is the Jacalin-type lectin domain.

It belongs to the jacalin lectin family. Formed of four alpha chains and four beta chains.

D-galactose-specific lectin, binds the T-antigen structure Gal-beta1,3-GalNAc. The polypeptide is Agglutinin alpha chain (Maclura pomifera (Osage orange)).